Here is a 321-residue protein sequence, read N- to C-terminus: o-succinylbenzoate synthase (321 aa).

Residue lysine 134 is the Proton donor of the active site. Mg(2+)-binding residues include aspartate 162, glutamate 191, and aspartate 214. Lysine 236 functions as the Proton acceptor in the catalytic mechanism.

It belongs to the mandelate racemase/muconate lactonizing enzyme family. MenC type 1 subfamily. The cofactor is a divalent metal cation.

The enzyme catalyses (1R,6R)-6-hydroxy-2-succinyl-cyclohexa-2,4-diene-1-carboxylate = 2-succinylbenzoate + H2O. The protein operates within quinol/quinone metabolism; 1,4-dihydroxy-2-naphthoate biosynthesis; 1,4-dihydroxy-2-naphthoate from chorismate: step 4/7. It participates in quinol/quinone metabolism; menaquinone biosynthesis. Converts 2-succinyl-6-hydroxy-2,4-cyclohexadiene-1-carboxylate (SHCHC) to 2-succinylbenzoate (OSB). The chain is o-succinylbenzoate synthase from Klebsiella pneumoniae (strain 342).